The following is a 946-amino-acid chain: Phosphatidylinositol 4,5-bisphosphate 5-phosphatase INP51 (946 aa).

The SAC domain occupies 151–480; that stretch reads LKKLFSDGTF…YYWLDRTYTK (330 aa). 2 disordered regions span residues 872–902 and 927–946; these read SDSI…SDLK and PKRD…FIER. The span at 936-946 shows a compositional bias: acidic residues; that stretch reads ENEDEPLFIER.

The protein belongs to the synaptojanin family. This sequence in the central section; belongs to the inositol 1,4,5-trisphosphate 5-phosphatase family. In terms of assembly, interacts with IRS4 and TAX4.

It is found in the cytoplasm. The protein resides in the cytoskeleton. Its subcellular location is the actin patch. The catalysed reaction is a 1,2-diacyl-sn-glycero-3-phospho-(1D-myo-inositol-4,5-bisphosphate) + H2O = a 1,2-diacyl-sn-glycero-3-phospho-(1D-myo-inositol 4-phosphate) + phosphate. Its activity is regulated as follows. IRS4 and TAX4 are both positive regulator of INP51 activity and phosphatidylinositol 4,5-bisphosphate turnover. Its function is as follows. Controls the cellular levels and subcellular distribution of phosphatidylinositol 4,5-bisphosphate (PtdIns(4,5)P2). Does not utilize phosphatidylinositol 3,5-bisphosphate (PtdIns(3,5)P2), nor phosphatidylinositol 3-phosphate (PtdIns(3)P) and phosphatidylinositol 4-phosphate (PtdIns(4)P). Plays an essential role in a TGN (trans Golgi network)-to-early endosome pathway. Involved in endocytosis and acts as a negative regulator of the Slm pathway which modulates polarized actin assembly and growth. This chain is Phosphatidylinositol 4,5-bisphosphate 5-phosphatase INP51 (INP51), found in Saccharomyces cerevisiae (strain ATCC 204508 / S288c) (Baker's yeast).